We begin with the raw amino-acid sequence, 747 residues long: WD repeat-containing protein 91 (747 aa).

A coiled-coil region spans residues 183–227 (QRTNQVQEENEVLRQKLFALQAEVHRLKKEEQQQEEAAALVQHKL). Serine 256 is subject to Phosphoserine. The segment covering 265-278 (LLPQSKKSPSRLSP) has biased composition (low complexity). Residues 265 to 358 (LLPQSKKSPS…SQTQCAEKKL (94 aa)) are disordered. Over residues 283–299 (PQAQSSAKKDTFSSQAT) the composition is skewed to polar residues. Position 288 is a phosphoserine (serine 288). The segment covering 332–343 (RLQDHGKERREL) has biased composition (basic and acidic residues). Over residues 344-353 (LSTSSSQTQC) the composition is skewed to polar residues. WD repeat units follow at residues 406–445 (EHHSSIMHCRVDCSGRRVASLDVDGVIKVWSFNPIMQTKA), 448–488 (ISKS…NLCE), 511–555 (VCSA…QQLQ), 560–599 (PEPIAINCTAFNHNGNLLVTGAADGVIRLFDMQQHGCAMS), 602–641 (AHCGEVYSVEFSYDENAVNSIGEDGKFIQWNIHKSGLKVS), 664–702 (VQVPRGRLFAFDSEGNYMLTCSATGGLIYKLGSEEKVLE), and 709–747 (GHRAPVVTVDWSTAMDCGTCLTASMDGKIKLTTLLAHKL).

This sequence belongs to the WD repeat WDR91 family. As to quaternary structure, interacts with WDR81; involved in early to late endosome cargo transport. Interacts with BECN1; negatively regulates the PI3 kinase/PI3K activity associated with endosomal membranes.

It is found in the early endosome membrane. Its subcellular location is the late endosome membrane. Its function is as follows. Functions as a negative regulator of the PI3 kinase/PI3K activity associated with endosomal membranes via BECN1, a core subunit of the PI3K complex. By modifying the phosphatidylinositol 3-phosphate/PtdInsP3 content of endosomal membranes may regulate endosome fusion, recycling, sorting and early to late endosome transport. It is for instance, required for the delivery of cargos like BST2/tetherin from early to late endosome and thereby participates indirectly to their degradation by the lysosome. May play a role in meiosis. The protein is WD repeat-containing protein 91 of Rattus norvegicus (Rat).